We begin with the raw amino-acid sequence, 136 residues long: ATP synthase F(0) complex subunit C1, mitochondrial (136 aa).

A mitochondrion-targeting transit peptide spans 1 to 61 (MQTAGALFIS…REFQTSVVSR (61 aa)). The helical transmembrane segment at 77–97 (VGVAGSGAGIGTVFGSLIIGY) threads the bilayer. K104 bears the N6,N6,N6-trimethyllysine mark. Residues 112-132 (ILGFALSEAMGLFCLMVAFLI) traverse the membrane as a helical segment.

The protein belongs to the ATPase C chain family. As to quaternary structure, homooctamer; the c-ring consists of eight c subunits forming a circle, and each subunit adopts a hairpin shape. Component of the ATP synthase complex composed at least of ATP5F1A/subunit alpha, ATP5F1B/subunit beta, ATP5MC1/subunit c (homooctomer), MT-ATP6/subunit a, MT-ATP8/subunit 8, ATP5ME/subunit e, ATP5MF/subunit f, ATP5MG/subunit g, ATP5MK/subunit k, ATP5MJ/subunit j, ATP5F1C/subunit gamma, ATP5F1D/subunit delta, ATP5F1E/subunit epsilon, ATP5PF/subunit F6, ATP5PB/subunit b, ATP5PD/subunit d, ATP5PO/subunit OSCP. ATP synthase complex consists of a soluble F(1) head domain (subunits alpha(3) and beta(3)) - the catalytic core - and a membrane F(0) domain - the membrane proton channel (subunits c, a, 8, e, f, g, k and j). These two domains are linked by a central stalk (subunits gamma, delta, and epsilon) rotating inside the F1 region and a stationary peripheral stalk (subunits F6, b, d, and OSCP). Interacts with TMEM70 (homooligomer form); this interaction facilitates the oligomer formation of subunit c/ATP5MC1 (c-ring) and the c-ring membrane insertion and also protects ATP5MC1 against intramitochondrial proteolysis. Post-translationally, trimethylated by ATPSCKMT at Lys-104. Methylation is required for proper incorporation of the C subunit into the ATP synthase complex and mitochondrial respiration.

The protein localises to the mitochondrion membrane. The enzyme catalyses H(+)(in) = H(+)(out). Subunit c, of the mitochondrial membrane ATP synthase complex (F(1)F(0) ATP synthase or Complex V) that produces ATP from ADP in the presence of a proton gradient across the membrane which is generated by electron transport complexes of the respiratory chain. ATP synthase complex consist of a soluble F(1) head domain - the catalytic core - and a membrane F(1) domain - the membrane proton channel. These two domains are linked by a central stalk rotating inside the F(1) region and a stationary peripheral stalk. During catalysis, ATP synthesis in the catalytic domain of F(1) is coupled via a rotary mechanism of the central stalk subunits to proton translocation. With the subunit a (MT-ATP6), forms the proton-conducting channel in the F(0) domain, that contains two crucial half-channels (inlet and outlet) that facilitate proton movement from the mitochondrial intermembrane space (IMS) into the matrix. Protons are taken up via the inlet half-channel and released through the outlet half-channel, following a Grotthuss mechanism. The chain is ATP synthase F(0) complex subunit C1, mitochondrial from Homo sapiens (Human).